The sequence spans 286 residues: Probable glucose uptake protein GlcU (286 aa).

Helical transmembrane passes span 4–22 (IFLA…LFNV), 27–49 (GPYS…VYIF), 53–72 (VLTP…WALG), 85–107 (VSRT…GVIV), 111–133 (WSTT…GVIL), 154–176 (IVIL…LFNV), 181–198 (ALLP…LLTF), 211–228 (IIPG…FISQ), 233–255 (VATS…ILIL), and 267–284 (IVVG…LGIA).

It belongs to the GRP transporter (TC 2.A.7.5) family.

It localises to the cell membrane. Functionally, involved in the uptake of glucose. The sequence is that of Probable glucose uptake protein GlcU (glcU) from Bacillus cereus (strain ATCC 14579 / DSM 31 / CCUG 7414 / JCM 2152 / NBRC 15305 / NCIMB 9373 / NCTC 2599 / NRRL B-3711).